Consider the following 487-residue polypeptide: 2-succinylbenzoate--CoA ligase (487 aa).

This sequence belongs to the ATP-dependent AMP-binding enzyme family. MenE subfamily.

The catalysed reaction is 2-succinylbenzoate + ATP + CoA = 2-succinylbenzoyl-CoA + AMP + diphosphate. It participates in quinol/quinone metabolism; 1,4-dihydroxy-2-naphthoate biosynthesis; 1,4-dihydroxy-2-naphthoate from chorismate: step 5/7. The protein operates within quinol/quinone metabolism; menaquinone biosynthesis. Converts 2-succinylbenzoate (OSB) to 2-succinylbenzoyl-CoA (OSB-CoA). This Bacillus velezensis (strain DSM 23117 / BGSC 10A6 / LMG 26770 / FZB42) (Bacillus amyloliquefaciens subsp. plantarum) protein is 2-succinylbenzoate--CoA ligase.